The following is a 210-amino-acid chain: 7-carboxy-7-deazaguanine synthase (210 aa).

Substrate is bound by residues 12 to 14 (LQG) and Arg-27. Residues 18–210 (HAGRASVFCR…VQTHKSLGIR (193 aa)) enclose the Radical SAM core domain. 3 residues coordinate [4Fe-4S] cluster: Cys-31, Cys-46, and Cys-49. Thr-51 is a Mg(2+) binding site. Thr-90 lines the substrate pocket. S-adenosyl-L-methionine-binding positions include Gly-92, 133-135 (SPK), and 173-176 (QPMD).

It belongs to the radical SAM superfamily. 7-carboxy-7-deazaguanine synthase family. Homodimer. Requires [4Fe-4S] cluster as cofactor. It depends on S-adenosyl-L-methionine as a cofactor. Mg(2+) serves as cofactor.

The enzyme catalyses 6-carboxy-5,6,7,8-tetrahydropterin + H(+) = 7-carboxy-7-deazaguanine + NH4(+). Its pathway is purine metabolism; 7-cyano-7-deazaguanine biosynthesis. Catalyzes the complex heterocyclic radical-mediated conversion of 6-carboxy-5,6,7,8-tetrahydropterin (CPH4) to 7-carboxy-7-deazaguanine (CDG), a step common to the biosynthetic pathways of all 7-deazapurine-containing compounds. The sequence is that of 7-carboxy-7-deazaguanine synthase from Bradyrhizobium diazoefficiens (strain JCM 10833 / BCRC 13528 / IAM 13628 / NBRC 14792 / USDA 110).